The following is a 229-amino-acid chain: Large ribosomal subunit protein uL1 (229 aa).

This sequence belongs to the universal ribosomal protein uL1 family. As to quaternary structure, part of the 50S ribosomal subunit.

Binds directly to 23S rRNA. The L1 stalk is quite mobile in the ribosome, and is involved in E site tRNA release. Its function is as follows. Protein L1 is also a translational repressor protein, it controls the translation of the L11 operon by binding to its mRNA. This Mannheimia succiniciproducens (strain KCTC 0769BP / MBEL55E) protein is Large ribosomal subunit protein uL1.